The primary structure comprises 638 residues: DNA gyrase subunit B (638 aa).

One can recognise a Toprim domain in the interval 431–545; sequence RELFIVEGNS…YGFVYIAQPP (115 aa). 3 residues coordinate Mg(2+): Glu-437, Asp-510, and Asp-512.

This sequence belongs to the type II topoisomerase GyrB family. In terms of assembly, heterotetramer, composed of two GyrA and two GyrB chains. In the heterotetramer, GyrA contains the active site tyrosine that forms a transient covalent intermediate with DNA, while GyrB binds cofactors and catalyzes ATP hydrolysis. Requires Mg(2+) as cofactor. Mn(2+) serves as cofactor. It depends on Ca(2+) as a cofactor.

It localises to the cytoplasm. The enzyme catalyses ATP-dependent breakage, passage and rejoining of double-stranded DNA.. Its function is as follows. A type II topoisomerase that negatively supercoils closed circular double-stranded (ds) DNA in an ATP-dependent manner to modulate DNA topology and maintain chromosomes in an underwound state. Negative supercoiling favors strand separation, and DNA replication, transcription, recombination and repair, all of which involve strand separation. Also able to catalyze the interconversion of other topological isomers of dsDNA rings, including catenanes and knotted rings. Type II topoisomerases break and join 2 DNA strands simultaneously in an ATP-dependent manner. The chain is DNA gyrase subunit B from Metamycoplasma arthritidis (Mycoplasma arthritidis).